Reading from the N-terminus, the 507-residue chain is Maturase K (507 aa).

The protein belongs to the intron maturase 2 family. MatK subfamily.

It localises to the plastid. The protein resides in the chloroplast. Usually encoded in the trnK tRNA gene intron. Probably assists in splicing its own and other chloroplast group II introns. This Lens ervoides (Beaded lentil) protein is Maturase K.